Reading from the N-terminus, the 238-residue chain is uncharacterized protein (238 aa).

Positions 1-28 (MSRNSRGSGRYVFVVLACVFGYTRAVHA) are cleaved as a signal peptide.

This is an uncharacterized protein from Treponema pallidum (strain Nichols).